The chain runs to 266 residues: Trehalose-6-phosphate phosphatase (266 aa).

The active-site Nucleophile is the Asp-20. The Mg(2+) site is built by Asp-20, Asp-22, and Asp-198. 20–22 (DLD) is a binding site for substrate.

This sequence belongs to the trehalose phosphatase family. The cofactor is Mg(2+). Mn(2+) is required as a cofactor. Requires Co(2+) as cofactor. It depends on Zn(2+) as a cofactor.

The enzyme catalyses alpha,alpha-trehalose 6-phosphate + H2O = alpha,alpha-trehalose + phosphate. It functions in the pathway glycan biosynthesis; trehalose biosynthesis. Its function is as follows. Removes the phosphate from trehalose 6-phosphate (Tre6P) to produce free trehalose. Also catalyzes the dephosphorylation of glucose-6-phosphate (Glu6P) and 2-deoxyglucose-6-phosphate (2dGlu6P). This is Trehalose-6-phosphate phosphatase (otsB) from Escherichia coli (strain K12).